Reading from the N-terminus, the 255-residue chain is 5'-nucleotidase SurE (255 aa).

A divalent metal cation-binding residues include Asp-16, Asp-17, Ser-47, and Asn-100.

This sequence belongs to the SurE nucleotidase family. A divalent metal cation is required as a cofactor.

It localises to the cytoplasm. It carries out the reaction a ribonucleoside 5'-phosphate + H2O = a ribonucleoside + phosphate. In terms of biological role, nucleotidase that shows phosphatase activity on nucleoside 5'-monophosphates. This Vibrio vulnificus (strain YJ016) protein is 5'-nucleotidase SurE.